The chain runs to 91 residues: UPF0250 protein Psyr_4360 (91 aa).

It belongs to the UPF0250 family.

This is UPF0250 protein Psyr_4360 from Pseudomonas syringae pv. syringae (strain B728a).